Reading from the N-terminus, the 591-residue chain is L-fucose isomerase (591 aa).

Residues Glu337 and Asp361 each act as proton acceptor in the active site. Residues Glu337, Asp361, and His528 each coordinate Mn(2+).

The protein belongs to the L-fucose isomerase family. As to quaternary structure, homohexamer. Requires Mn(2+) as cofactor.

Its subcellular location is the cytoplasm. The enzyme catalyses L-fucose = L-fuculose. Its pathway is carbohydrate degradation; L-fucose degradation; L-lactaldehyde and glycerone phosphate from L-fucose: step 1/3. Converts the aldose L-fucose into the corresponding ketose L-fuculose. The chain is L-fucose isomerase from Escherichia coli (strain ATCC 8739 / DSM 1576 / NBRC 3972 / NCIMB 8545 / WDCM 00012 / Crooks).